A 248-amino-acid polypeptide reads, in one-letter code: Type III pantothenate kinase (248 aa).

6–13 contacts ATP; sequence ELGNSQLK. Substrate contacts are provided by residues tyrosine 94 and 101–104; that span reads GVDR. Aspartate 103 serves as the catalytic Proton acceptor. K(+) is bound at residue aspartate 123. Threonine 126 contacts ATP. Threonine 179 serves as a coordination point for substrate.

Belongs to the type III pantothenate kinase family. In terms of assembly, homodimer. The cofactor is NH4(+). K(+) is required as a cofactor.

It localises to the cytoplasm. It carries out the reaction (R)-pantothenate + ATP = (R)-4'-phosphopantothenate + ADP + H(+). The protein operates within cofactor biosynthesis; coenzyme A biosynthesis; CoA from (R)-pantothenate: step 1/5. Its function is as follows. Catalyzes the phosphorylation of pantothenate (Pan), the first step in CoA biosynthesis. The polypeptide is Type III pantothenate kinase (Hydrogenovibrio crunogenus (strain DSM 25203 / XCL-2) (Thiomicrospira crunogena)).